Reading from the N-terminus, the 186-residue chain is Small ribosomal subunit protein eS7 (186 aa).

Belongs to the eukaryotic ribosomal protein eS7 family. Component of the small ribosomal subunit. Mature ribosomes consist of a small (40S) and a large (60S) subunit. The 40S subunit contains about 32 different proteins and 1 molecule of RNA (18S). The 60S subunit contains 45 different proteins and 3 molecules of RNA (25S, 5.8S and 5S).

The protein resides in the cytoplasm. Its function is as follows. Component of the ribosome, a large ribonucleoprotein complex responsible for the synthesis of proteins in the cell. The small ribosomal subunit (SSU) binds messenger RNAs (mRNAs) and translates the encoded message by selecting cognate aminoacyl-transfer RNA (tRNA) molecules. The large subunit (LSU) contains the ribosomal catalytic site termed the peptidyl transferase center (PTC), which catalyzes the formation of peptide bonds, thereby polymerizing the amino acids delivered by tRNAs into a polypeptide chain. The nascent polypeptides leave the ribosome through a tunnel in the LSU and interact with protein factors that function in enzymatic processing, targeting, and the membrane insertion of nascent chains at the exit of the ribosomal tunnel. RPS7A is involved in nucleolar processing of pre-18S ribosomal RNA and ribosome assembly. This is Small ribosomal subunit protein eS7 (RPS7A) from Candida albicans (strain SC5314 / ATCC MYA-2876) (Yeast).